The following is a 182-amino-acid chain: Peptidyl-tRNA hydrolase (182 aa).

TRNA is bound at residue Tyr14. The active-site Proton acceptor is His19. Phe64, Asn66, and Asn112 together coordinate tRNA.

Belongs to the PTH family. Monomer.

It localises to the cytoplasm. The catalysed reaction is an N-acyl-L-alpha-aminoacyl-tRNA + H2O = an N-acyl-L-amino acid + a tRNA + H(+). In terms of biological role, hydrolyzes ribosome-free peptidyl-tRNAs (with 1 or more amino acids incorporated), which drop off the ribosome during protein synthesis, or as a result of ribosome stalling. Functionally, catalyzes the release of premature peptidyl moieties from peptidyl-tRNA molecules trapped in stalled 50S ribosomal subunits, and thus maintains levels of free tRNAs and 50S ribosomes. In Wolbachia pipientis wMel, this protein is Peptidyl-tRNA hydrolase.